Here is a 681-residue protein sequence, read N- to C-terminus: Epithelial splicing regulatory protein 1 (681 aa).

RRM domains are found at residues 225-302, 326-406, and 445-525; these read TVVR…KATG, VIVR…RSTA, and DCIR…QCSA. Phosphoserine is present on Ser-543. At Arg-582 the chain carries Omega-N-methylarginine.

The protein belongs to the ESRP family. In terms of tissue distribution, epithelial cell-specific.

It is found in the nucleus. MRNA splicing factor that regulates the formation of epithelial cell-specific isoforms. Specifically regulates the expression of FGFR2-IIIb, an epithelial cell-specific isoform of FGFR2. Also regulates the splicing of CD44, CTNND1, ENAH, 3 transcripts that undergo changes in splicing during the epithelial-to-mesenchymal transition (EMT). Acts by directly binding specific sequences in mRNAs. Binds the GU-rich sequence motifs in the ISE/ISS-3, a cis-element regulatory region present in the mRNA of FGFR2. Regulates splicing and expression of genes involved in inner ear development, auditory hair cell differentiation, and cell fate specification in the cochlear epithelium. This is Epithelial splicing regulatory protein 1 (ESRP1) from Homo sapiens (Human).